Consider the following 415-residue polypeptide: ATP-dependent Clp protease ATP-binding subunit ClpX (415 aa).

A ClpX-type ZB domain is found at 1–53 (MLRSKGDLVLGCSFCGKKEDERRRIVTGHGVSICNYCVERCAEYLRDRKPSAL). The Zn(2+) site is built by Cys12, Cys15, Cys34, and Cys37. An ATP-binding site is contributed by 118 to 125 (PTGSGKTL).

The protein belongs to the ClpX chaperone family. In terms of assembly, component of the ClpX-ClpP complex. Forms a hexameric ring that, in the presence of ATP, binds to fourteen ClpP subunits assembled into a disk-like structure with a central cavity, resembling the structure of eukaryotic proteasomes.

In terms of biological role, ATP-dependent specificity component of the Clp protease. It directs the protease to specific substrates. Can perform chaperone functions in the absence of ClpP. The polypeptide is ATP-dependent Clp protease ATP-binding subunit ClpX (Treponema pallidum (strain Nichols)).